Reading from the N-terminus, the 433-residue chain is Adenosylhomocysteinase B (433 aa).

Residues T57, D132, E157, K187, and D191 each coordinate substrate. Residues 184–351 (SVTKSKFDNL…EGRLVNLGCA (168 aa)) are NAD binding.

It belongs to the adenosylhomocysteinase family. In terms of assembly, homotetramer. Requires NAD(+) as cofactor.

It localises to the cytoplasm. It carries out the reaction S-adenosyl-L-homocysteine + H2O = L-homocysteine + adenosine. Its pathway is amino-acid biosynthesis; L-homocysteine biosynthesis; L-homocysteine from S-adenosyl-L-homocysteine: step 1/1. In terms of biological role, catalyzes the hydrolysis of S-adenosyl-L-homocysteine to form adenosine and homocysteine. Binds copper ions. The protein is Adenosylhomocysteinase B (ahcy-b) of Xenopus laevis (African clawed frog).